Here is a 192-residue protein sequence, read N- to C-terminus: Ion-translocating oxidoreductase complex subunit B (192 aa).

A hydrophobic region spans residues 1–26 (MNTIWIAVAAISLLGLAFGAILGYAS). The 60-residue stretch at 32–91 (EDDPVVEKIDEILPQSQCGQCGYPGCRPYAEAISCNGEKINRCAPGGEAVMLKISELLNV) folds into the 4Fe-4S domain. 12 residues coordinate [4Fe-4S] cluster: Cys49, Cys52, Cys57, Cys74, Cys117, Cys120, Cys123, Cys127, Cys147, Cys150, Cys153, and Cys157. 2 consecutive 4Fe-4S ferredoxin-type domains span residues 108–137 (VVAV…GATR) and 138–167 (AMHT…LQPV).

This sequence belongs to the 4Fe4S bacterial-type ferredoxin family. RnfB subfamily. The complex is composed of six subunits: RsxA, RsxB, RsxC, RsxD, RsxE and RsxG. [4Fe-4S] cluster serves as cofactor.

It is found in the cell inner membrane. Its function is as follows. Part of a membrane-bound complex that couples electron transfer with translocation of ions across the membrane. Required to maintain the reduced state of SoxR. In Escherichia fergusonii (strain ATCC 35469 / DSM 13698 / CCUG 18766 / IAM 14443 / JCM 21226 / LMG 7866 / NBRC 102419 / NCTC 12128 / CDC 0568-73), this protein is Ion-translocating oxidoreductase complex subunit B.